The primary structure comprises 218 residues: Cytidylate kinase (218 aa).

10 to 18 is an ATP binding site; sequence GPAGSGKST.

It belongs to the cytidylate kinase family. Type 1 subfamily.

It localises to the cytoplasm. It carries out the reaction CMP + ATP = CDP + ADP. The enzyme catalyses dCMP + ATP = dCDP + ADP. The chain is Cytidylate kinase from Fusobacterium nucleatum subsp. nucleatum (strain ATCC 25586 / DSM 15643 / BCRC 10681 / CIP 101130 / JCM 8532 / KCTC 2640 / LMG 13131 / VPI 4355).